The sequence spans 406 residues: Bifunctional enzyme IspD/IspF (406 aa).

The interval 1 to 247 (MSLIRVNGEA…ALFFNPAKDT (247 aa)) is 2-C-methyl-D-erythritol 4-phosphate cytidylyltransferase. Positions 248-406 (FIGMGFDTHA…HVSMRYKQKL (159 aa)) are 2-C-methyl-D-erythritol 2,4-cyclodiphosphate synthase. A divalent metal cation is bound by residues D254 and H256. 4-CDP-2-C-methyl-D-erythritol 2-phosphate is bound by residues 254-256 (DTH) and 280-281 (HS). H288 is a binding site for a divalent metal cation. 4-CDP-2-C-methyl-D-erythritol 2-phosphate contacts are provided by residues 302–304 (DIG), 307–311 (FPDND), 378–381 (TTME), F385, and K388.

This sequence in the N-terminal section; belongs to the IspD/TarI cytidylyltransferase family. IspD subfamily. The protein in the C-terminal section; belongs to the IspF family. It depends on a divalent metal cation as a cofactor.

The catalysed reaction is 2-C-methyl-D-erythritol 4-phosphate + CTP + H(+) = 4-CDP-2-C-methyl-D-erythritol + diphosphate. It catalyses the reaction 4-CDP-2-C-methyl-D-erythritol 2-phosphate = 2-C-methyl-D-erythritol 2,4-cyclic diphosphate + CMP. The protein operates within isoprenoid biosynthesis; isopentenyl diphosphate biosynthesis via DXP pathway; isopentenyl diphosphate from 1-deoxy-D-xylulose 5-phosphate: step 2/6. Its pathway is isoprenoid biosynthesis; isopentenyl diphosphate biosynthesis via DXP pathway; isopentenyl diphosphate from 1-deoxy-D-xylulose 5-phosphate: step 4/6. In terms of biological role, bifunctional enzyme that catalyzes the formation of 4-diphosphocytidyl-2-C-methyl-D-erythritol from CTP and 2-C-methyl-D-erythritol 4-phosphate (MEP) (IspD), and catalyzes the conversion of 4-diphosphocytidyl-2-C-methyl-D-erythritol 2-phosphate (CDP-ME2P) to 2-C-methyl-D-erythritol 2,4-cyclodiphosphate (ME-CPP) with a corresponding release of cytidine 5-monophosphate (CMP) (IspF). This Helicobacter pylori (strain P12) protein is Bifunctional enzyme IspD/IspF.